A 123-amino-acid polypeptide reads, in one-letter code: Large ribosomal subunit protein uL29x (123 aa).

It belongs to the universal ribosomal protein uL29 family.

The polypeptide is Large ribosomal subunit protein uL29x (RPL35C) (Arabidopsis thaliana (Mouse-ear cress)).